The following is a 504-amino-acid chain: Cytochrome P450 3A1 (504 aa).

C443 is a binding site for heme.

It belongs to the cytochrome P450 family. Heme is required as a cofactor.

It is found in the endoplasmic reticulum membrane. Its subcellular location is the microsome membrane. The catalysed reaction is an organic molecule + reduced [NADPH--hemoprotein reductase] + O2 = an alcohol + oxidized [NADPH--hemoprotein reductase] + H2O + H(+). Cytochromes P450 are a group of heme-thiolate monooxygenases. In liver microsomes, this enzyme is involved in an NADPH-dependent electron transport pathway. It oxidizes a variety of structurally unrelated compounds, including steroids, fatty acids, and xenobiotics. The polypeptide is Cytochrome P450 3A1 (Cyp3a1) (Rattus norvegicus (Rat)).